A 93-amino-acid chain; its full sequence is U12-lycotoxin-Ls1b (93 aa).

Positions 1–18 are cleaved as a signal peptide; that stretch reads MKFAVILLFSLVVLAVAS. A propeptide spanning residues 19-38 is cleaved from the precursor; that stretch reads ESVEEVRREIDIEDLPEQQR.

The protein belongs to the neurotoxin 31 family. Contains 5 disulfide bonds. In terms of tissue distribution, expressed by the venom gland.

The protein resides in the secreted. This is U12-lycotoxin-Ls1b from Lycosa singoriensis (Wolf spider).